Here is a 1226-residue protein sequence, read N- to C-terminus: MRAVLRLLSTHTVFSPIETIVSVFVLATLAYFHILSGIKHSSFFASSHPPAIRPAFAHLTNGEWVAVSQHDWTEAWKHPGGSLDALELQQVVFTLDDKTQPSAVLDASAISQHLVSNVPALSGKAYSSLCHHPNVSGTSCFTSVSGPGASPILTLSFKPGTRDDWLGSLRKEKTITLDGVKYDVGAGKRQESIGDMESSKWVAYALSALVLRFWELTKADSLDILVVLTGYILMHVTFMRLFLASRALGSNFWLSAGIFSSATISFLFTLPMCRSMDIPLDPIALTEALPFLVCTVGFDKPLRLARAVMAHPNILKPQDDGRMKAAGDVILEALDRVGNMILRDYALEIAVLFVGVNSRVGGLKEFCAVAAALLAMDRLMTFTLYTAVLTIMVEVRRIKKVRDMTKARSRSSSITAVTANGTAIRGVLSRKSSKQSVTEPETTKNLRQRATDSAIGVKGSLLKDGGRLQEAEENPMARLKLLLIASFLTLHILNFCTTLTSATANARHQRHPFRTVQEVVPIPRVDITTPAIANILSHLAVAQEPMFTVVGSEPIELLVKVAAPVYVHALPLAPALRASNTNTGEAIENFMSSWSSLVGDPVVSKWIVALLAVSVALNGYLLKGIAAGSGLAAMRAVRSQGVRFRSRARSIVKISDEPEPEPEHSIDPAPVVFFASAAPAVEAPAPAPAPEPEPPVNRPPPLTIFSRPLNLETVDKKLQDALPIRSPPPVEPITPESREVEPTQVEVRSLAECVDVFENGPRPVSVALKTLNDEEVILLCQTGKIAPYALVKMLADFDRAVRVRRALISRASRTKTLENSLVPMKDYDYARVMGACCENVIGYMPLPLGIAGPLKIDGLMYPIPMATAEGTLVASTSRGCKALNAGGGVTTVLTADGMTRGPAIDFPSIVRAAEAKAFIESEDGYATIREAFESTSRFAKLQKIKCALAGRTLFVRFATRTGDAMGMNMISKATEKALDVLSHEFPEMVVLALSGNYCTDKKPAAISWIEGRGKSIVAEAVIPGKVVKSVLKTTVESLCNVNTKKNLIGSAMAGSVGGFNAHAANILTAVFLATGQDPAQNVESSNCMTLMEPTNGGEDLLMTISMPCIEVGTVGGGTILEPQGAVLDLLGVRGAHPTNPGQNAQQLARIIASAVMAGELSLISALAAGHLVRAHLAHNRSQLNTPMPSRPHTPGPEDVSHVQQLPTPSASDDKGVTAQGYVVEAK.

A run of 5 helical transmembrane segments spans residues 17–37 (IETI…ILSG), 224–244 (ILVV…LFLA), 252–272 (FWLS…TLPM), 337–357 (VGNM…VGVN), and 373–393 (LLAM…TIMV). In terms of domain architecture, SSD spans 223–391 (DILVVLTGYI…FTLYTAVLTI (169 aa)). Positions 428–449 (LSRKSSKQSVTEPETTKNLRQR) are disordered. Positions 434 to 445 (KQSVTEPETTKN) are enriched in polar residues. A helical transmembrane segment spans residues 481-501 (LLLIASFLTLHILNFCTTLTS). Disordered regions lie at residues 683-702 (APAP…PPPL) and 722-742 (LPIR…EVEP). A compositionally biased stretch (pro residues) spans 685–702 (APAPAPEPEPPVNRPPPL). Catalysis depends on Glu-869, which acts as the Charge relay system. 875–881 (STSRGCK) contributes to the CoA binding site. Residues 936–938 (SRF) and 963–971 (DAMGMNMIS) each bind NADP(+). The active-site Charge relay system is the Lys-1001. 1030–1032 (VLK) contributes to the CoA binding site. Asp-1077 serves as the catalytic Charge relay system. A helical transmembrane segment spans residues 1150–1170 (IIASAVMAGELSLISALAAGH). 1174–1175 (AH) provides a ligand contact to CoA. His-1175 functions as the Proton donor in the catalytic mechanism. Residue 1179 to 1180 (NR) participates in NADP(+) binding. Residues 1182-1226 (QLNTPMPSRPHTPGPEDVSHVQQLPTPSASDDKGVTAQGYVVEAK) are disordered. Over residues 1201-1210 (HVQQLPTPSA) the composition is skewed to polar residues.

The protein belongs to the HMG-CoA reductase family.

The protein localises to the endoplasmic reticulum membrane. The enzyme catalyses (R)-mevalonate + 2 NADP(+) + CoA = (3S)-3-hydroxy-3-methylglutaryl-CoA + 2 NADPH + 2 H(+). Its pathway is metabolic intermediate biosynthesis; (R)-mevalonate biosynthesis; (R)-mevalonate from acetyl-CoA: step 3/3. Functionally, HMG-CoA reductase; part of the first module of ergosterol biosynthesis pathway that includes the early steps of the pathway, conserved across all eukaryotes, and which results in the formation of mevalonate from acetyl-coenzyme A (acetyl-CoA). This module also plays a key role in the biosynthesis of triterpenes such as ganoderic acids (GA), a group of highly oxygenated lanostane-type triterpenoids which are well recognized as a main group of unique bioactive compounds in the medicinal mushroom Ganoderma lucidum. In this module, the acetyl-CoA acetyltransferase catalyzes the formation of acetoacetyl-CoA. The hydroxymethylglutaryl-CoA synthase HMGS then condenses acetyl-CoA with acetoacetyl-CoA to form HMG-CoA. The rate-limiting step of the early module is the reduction to mevalonate by the 3-hydroxy-3-methylglutaryl-coenzyme A (HMG-CoA) reductase. This chain is 3-hydroxy-3-methylglutaryl-coenzyme A reductase, found in Ganoderma lucidum (Ling zhi medicinal fungus).